The sequence spans 187 residues: uncharacterized protein (187 aa).

This is an uncharacterized protein from Acanthamoeba polyphaga mimivirus (APMV).